The following is a 1766-amino-acid chain: DNA-directed RNA polymerase II subunit RPB1-A (1766 aa).

Cys-69, Cys-72, Cys-79, and His-82 together coordinate Zn(2+). Asp-487, Asp-489, and Asp-491 together coordinate Mg(2+). The bridging helix stretch occupies residues 813 to 825 (PHEFFFHTMAGRE). The interval 1660–1766 (HAMSSAAPPS…EFGDEEEEEQ (107 aa)) is disordered. Over residues 1706–1716 (RGDEPSTHRSD) the composition is skewed to basic and acidic residues. Residues 1742-1756 (PTAKTPQQAAPPTAA) show a composition bias toward low complexity.

It belongs to the RNA polymerase beta' chain family. In terms of assembly, component of the RNA polymerase II (Pol II) complex consisting of 12 subunits.

It localises to the nucleus. It catalyses the reaction RNA(n) + a ribonucleoside 5'-triphosphate = RNA(n+1) + diphosphate. Functionally, DNA-dependent RNA polymerase catalyzes the transcription of DNA into RNA using the four ribonucleoside triphosphates as substrates. Largest and catalytic component of RNA polymerase II which synthesizes mRNA precursors and many functional non-coding RNAs. Forms the polymerase active center together with the second largest subunit. Pol II is the central component of the basal RNA polymerase II transcription machinery. It is composed of mobile elements that move relative to each other. RPB1 is part of the core element with the central large cleft, the clamp element that moves to open and close the cleft and the jaws that are thought to grab the incoming DNA template. At the start of transcription, a single-stranded DNA template strand of the promoter is positioned within the central active site cleft of Pol II. A bridging helix emanates from RPB1 and crosses the cleft near the catalytic site and is thought to promote translocation of Pol II by acting as a ratchet that moves the RNA-DNA hybrid through the active site by switching from straight to bent conformations at each step of nucleotide addition. During transcription elongation, Pol II moves on the template as the transcript elongates. This chain is DNA-directed RNA polymerase II subunit RPB1-A (TRP4.8), found in Trypanosoma brucei brucei.